A 328-amino-acid polypeptide reads, in one-letter code: Alcohol-sensitive RING finger protein 1 (328 aa).

The RING-type 1; atypical zinc finger occupies 18–61 (CSICWESMPSGVGRLMPCGHEYHLACIRKWFHLHSGNRSCPVCR). The RING-type 2; atypical zinc-finger motif lies at 129–177 (CGICGEMNGDIDTCCNRCHHMYHHSCLGQLLVEVNAEREQGWSHCIFCY).

The protein resides in the cytoplasm. It localises to the nucleus. In terms of biological role, required for tolerance to alcohol. The protein is Alcohol-sensitive RING finger protein 1 (ASR1) of Eremothecium gossypii (strain ATCC 10895 / CBS 109.51 / FGSC 9923 / NRRL Y-1056) (Yeast).